Reading from the N-terminus, the 368-residue chain is Glutamate 5-kinase (368 aa).

An ATP-binding site is contributed by Lys11. 3 residues coordinate substrate: Ser51, Asp138, and Asn150. ATP contacts are provided by residues 170 to 171 (TD) and 212 to 218 (TGGMATK). The region spanning 276–354 (AGEIIVDHGA…QQISQILGYE (79 aa)) is the PUA domain.

The protein belongs to the glutamate 5-kinase family.

The protein localises to the cytoplasm. It carries out the reaction L-glutamate + ATP = L-glutamyl 5-phosphate + ADP. It functions in the pathway amino-acid biosynthesis; L-proline biosynthesis; L-glutamate 5-semialdehyde from L-glutamate: step 1/2. Catalyzes the transfer of a phosphate group to glutamate to form L-glutamate 5-phosphate. This chain is Glutamate 5-kinase, found in Photorhabdus laumondii subsp. laumondii (strain DSM 15139 / CIP 105565 / TT01) (Photorhabdus luminescens subsp. laumondii).